A 743-amino-acid chain; its full sequence is MIEDSGKRGNTMAERRQLFAEMRAQDLDRIRLSTYRTACKLRFVQKKCNLHLVDIWNVIEALRENALNNLDPNTELNVSRLEAVLSTIFYQLNKRMPTTHQIHVEQSISLLLNFLLAAFDPEGHGKISVFAVKMALATLCGGKIMDKLRYIFSMISDSSGVMVYGRYDQFLREVLKLPTAVFEGPSFGYTEQSARSCFSQQKKVTLNGFLDTLMSDPPPQCLVWLPLLHRLANVENVFHPVECSYCHSESMMGFRYRCQQCHNYQLCQDCFWRGHAGGSHSNQHQMKEYTSWKSPAKKLTNALSKSLSCASSREPLHPMFPDQPEKPLNLAHIVDTWPPRPVTSMNDTLFSHSVPSSGSPFITRSSPPKDSEVEQNKLLARAAPAFLKGKGIQYSLNVADRLADEHVLIGLYVNMLRNNPSCMLESSNRLDEEHRLIARYAARLAAESSSSQPPQQRSAPDISFTIDANKQQRQLIAELENKNREILQEIQRLRLEHEQASQPTPEKAQQNPTLLAELRLLRQRKDELEQRMSALQESRRELMVQLEGLMKLLKTQGAGSPRSSPSHTISRPIPMPIRSASACSTPTHTPQDSLTGVGGDVQEAFAQSSRRNLRNDLLVAADSITNTMSSLVKELNSEVGSETESNVDSEFARTQFEDLVPSPTSEKAFLAQIHARKPGYIHSGATTSTMRGDMVTEDADPYVQPEDENYENDSVRQLENELQMEEYLKQKLQDEAYQVSLQG.

Positions 1–288 (MIEDSGKRGN…SHSNQHQMKE (288 aa)) are interaction with MAGEE1. A ZZ-type zinc finger spans residues 238-294 (FHPVECSYCHSESMMGFRYRCQQCHNYQLCQDCFWRGHAGGSHSNQHQMKEYTSWKS). Cys-243, Cys-246, Cys-258, Cys-261, Cys-267, Cys-270, His-280, and His-284 together coordinate Zn(2+). The interval 400 to 450 (DRLADEHVLIGLYVNMLRNNPSCMLESSNRLDEEHRLIARYAARLAAESSS) is syntrophin-binding region. A coiled-coil region spans residues 461-556 (DISFTIDANK…EGLMKLLKTQ (96 aa)). Positions 556-575 (QGAGSPRSSPSHTISRPIPM) are disordered. Polar residues predominate over residues 557–569 (GAGSPRSSPSHTI). The residue at position 662 (Ser-662) is a Phosphoserine.

This sequence belongs to the dystrophin family. Dystrobrevin subfamily. Interacts with dystrophin, utrophin and the syntrophins SNTA1, SNTB1, SNTB2, SNTG1 and SNTG2. Interacts with MAGEE1. Binds dystrobrevin binding protein 1. Interacts with CTNNAL1. The interaction is required for correct localization of both CTNNAL1 and DTNA. In terms of assembly, does not interact with dystrophin. Post-translationally, phosphorylation of DTN-1 on tyrosine kinase substrate domain present in the C-terminus. In terms of tissue distribution, highly expressed in brain, skeletal and cardiac muscles, and expressed at lower levels in lung, liver and pancreas. Isoform 2 is not expressed in cardiac muscle. Isoform 7 and isoform 8 are only expressed in muscle.

It is found in the cytoplasm. It localises to the synapse. Its subcellular location is the cell membrane. Its function is as follows. May be involved in the formation and stability of synapses as well as being involved in the clustering of nicotinic acetylcholine receptors. This is Dystrobrevin alpha from Homo sapiens (Human).